We begin with the raw amino-acid sequence, 178 residues long: MTKKEQALIEQYAKSLVQVCQERDTLEALQADVLAILEVFKATNLAKTLSSLAVPRAKKLELVRQLQGDNIIYLNNFLEVMLQNEREAYLYQVLLRVLSELASVSNQYDVTVTSAVPLSEEQKQRVRTVVSKRLAVKTGRLIEKVDPSLIGGFMISVNNKVIDTSIRRQLQAFKMNLK.

The protein belongs to the ATPase delta chain family. In terms of assembly, F-type ATPases have 2 components, F(1) - the catalytic core - and F(0) - the membrane proton channel. F(1) has five subunits: alpha(3), beta(3), gamma(1), delta(1), epsilon(1). F(0) has three main subunits: a(1), b(2) and c(10-14). The alpha and beta chains form an alternating ring which encloses part of the gamma chain. F(1) is attached to F(0) by a central stalk formed by the gamma and epsilon chains, while a peripheral stalk is formed by the delta and b chains.

The protein localises to the cell membrane. F(1)F(0) ATP synthase produces ATP from ADP in the presence of a proton or sodium gradient. F-type ATPases consist of two structural domains, F(1) containing the extramembraneous catalytic core and F(0) containing the membrane proton channel, linked together by a central stalk and a peripheral stalk. During catalysis, ATP synthesis in the catalytic domain of F(1) is coupled via a rotary mechanism of the central stalk subunits to proton translocation. In terms of biological role, this protein is part of the stalk that links CF(0) to CF(1). It either transmits conformational changes from CF(0) to CF(1) or is implicated in proton conduction. The chain is ATP synthase subunit delta from Streptococcus equi subsp. zooepidemicus (strain MGCS10565).